Reading from the N-terminus, the 430-residue chain is Replication factor C large subunit (430 aa).

Position 75 to 82 (75 to 82) interacts with ATP; it reads GPPGTGKT.

It belongs to the activator 1 small subunits family. RfcL subfamily. Heteromultimer composed of small subunits (RfcS) and large subunits (RfcL).

Its function is as follows. Part of the RFC clamp loader complex which loads the PCNA sliding clamp onto DNA. This Nanoarchaeum equitans (strain Kin4-M) protein is Replication factor C large subunit.